The chain runs to 393 residues: uncharacterized protein (393 aa).

A B box-type zinc finger spans residues 6 to 47 (KYDNKCAIHKEHKIKMICATCKDVVCNECILLDHNGHKFGRI). The Zn(2+) site is built by C11, H14, C34, and H39.

This is an uncharacterized protein from Dictyostelium discoideum (Social amoeba).